Here is a 152-residue protein sequence, read N- to C-terminus: Ribonuclease H (152 aa).

The region spanning 1–142 (MDSKVVIYTD…ADKLAVQGRE (142 aa)) is the RNase H type-1 domain. Residues D10, E48, D70, and D134 each contribute to the Mg(2+) site.

Belongs to the RNase H family. In terms of assembly, monomer. Requires Mg(2+) as cofactor.

Its subcellular location is the cytoplasm. It catalyses the reaction Endonucleolytic cleavage to 5'-phosphomonoester.. Its function is as follows. Endonuclease that specifically degrades the RNA of RNA-DNA hybrids. This is Ribonuclease H from Rickettsia typhi (strain ATCC VR-144 / Wilmington).